A 601-amino-acid chain; its full sequence is Protein NRT1/ PTR FAMILY 4.4 (601 aa).

2 helical membrane passes run 44 to 64 (AALF…AVGN) and 82 to 102 (ANLV…GGFL). Thr-112 carries the phosphothreonine modification. 10 consecutive transmembrane segments (helical) span residues 113-133 (MLVF…QAHL), 160-180 (TLYT…PNII), 198-218 (FFNA…TLLV), 228-248 (VGFG…VAGT), 337-357 (ILLS…ILAQ), 386-406 (AIPY…FVPL), 420-440 (LQRI…AALV), 453-473 (VMLS…SEMF), 493-513 (FLTA…SVLV), and 544-564 (HFYW…LFWS).

The protein belongs to the major facilitator superfamily. Proton-dependent oligopeptide transporter (POT/PTR) (TC 2.A.17) family. As to expression, expressed in shoots, roots and stems.

Its subcellular location is the membrane. The chain is Protein NRT1/ PTR FAMILY 4.4 (NPF4.4) from Arabidopsis thaliana (Mouse-ear cress).